The sequence spans 324 residues: FCS-Like Zinc finger 11 (324 aa).

The segment at 266–309 (NFLGICNFCNKKLGGGDDIYMYREKSFCSEECRSEEMMIDEEDL) adopts an FLZ-type zinc-finger fold.

This sequence belongs to the FLZ family. Interacts with KIN10 and KIN11 via its FLZ-type zinc finger domain. Forms heterodimer with FLZ2 in vitro.

The protein resides in the cytoplasm. Its subcellular location is the nucleus. In terms of biological role, may act as an adapter to facilitate the interaction of SnRK1 complex with effector proteins, conferring tissue- and stimulus-type specific differences in the SnRK1 regulation pathway. This chain is FCS-Like Zinc finger 11, found in Arabidopsis thaliana (Mouse-ear cress).